Reading from the N-terminus, the 94-residue chain is MEARDVILRPVVTESSMAAMDDKKYTFDVDVRANKTQVRYAIEEIFGVNVKNVNIMNVRGKLKRQGRYAGYTKKRRKAIVTLTADSKEIKIFED.

This sequence belongs to the universal ribosomal protein uL23 family. In terms of assembly, part of the 50S ribosomal subunit. Contacts protein L29, and trigger factor when it is bound to the ribosome.

Its function is as follows. One of the early assembly proteins it binds 23S rRNA. One of the proteins that surrounds the polypeptide exit tunnel on the outside of the ribosome. Forms the main docking site for trigger factor binding to the ribosome. The protein is Large ribosomal subunit protein uL23 of Latilactobacillus sakei subsp. sakei (strain 23K) (Lactobacillus sakei subsp. sakei).